Here is a 78-residue protein sequence, read N- to C-terminus: Acyl carrier protein (78 aa).

The Carrier domain occupies 2–77 (SNIEQQVKKI…LAIDYINAHN (76 aa)). At Ser-37 the chain carries O-(pantetheine 4'-phosphoryl)serine.

The protein belongs to the acyl carrier protein (ACP) family. 4'-phosphopantetheine is transferred from CoA to a specific serine of apo-ACP by AcpS. This modification is essential for activity because fatty acids are bound in thioester linkage to the sulfhydryl of the prosthetic group.

It is found in the cytoplasm. The protein operates within lipid metabolism; fatty acid biosynthesis. Its function is as follows. Carrier of the growing fatty acid chain in fatty acid biosynthesis. The sequence is that of Acyl carrier protein from Neisseria gonorrhoeae (strain ATCC 700825 / FA 1090).